We begin with the raw amino-acid sequence, 204 residues long: Glycerol-3-phosphate acyltransferase (204 aa).

The next 4 membrane-spanning stretches (helical) occupy residues 8–28 (NAQF…LLLA), 76–96 (GVLV…LWGI), 122–142 (MGVM…VWAL), and 166–186 (FILH…VLLY).

This sequence belongs to the PlsY family. As to quaternary structure, probably interacts with PlsX.

It is found in the cell inner membrane. It carries out the reaction an acyl phosphate + sn-glycerol 3-phosphate = a 1-acyl-sn-glycero-3-phosphate + phosphate. Its pathway is lipid metabolism; phospholipid metabolism. In terms of biological role, catalyzes the transfer of an acyl group from acyl-phosphate (acyl-PO(4)) to glycerol-3-phosphate (G3P) to form lysophosphatidic acid (LPA). This enzyme utilizes acyl-phosphate as fatty acyl donor, but not acyl-CoA or acyl-ACP. The protein is Glycerol-3-phosphate acyltransferase of Sulfurimonas denitrificans (strain ATCC 33889 / DSM 1251) (Thiomicrospira denitrificans (strain ATCC 33889 / DSM 1251)).